The primary structure comprises 68 residues: Protein transport protein Sec61 subunit gamma (68 aa).

Residues 1–32 (MDQVMAWVEPGKQFAKDSIRLVKRCTKPDRKE) lie on the Cytoplasmic side of the membrane. Residues 33-61 (FQKIAVATAIGFAIMGFIGFFVKLIHIPI) form a helical membrane-spanning segment. The Extracellular portion of the chain corresponds to 62–68 (NNIIVGS).

The protein belongs to the SecE/SEC61-gamma family. Heterotrimeric complex composed of SEC61-alpha, SEC61-beta and SEC61-gamma. Component of the ribosome-associated ER translocon complex.

It is found in the endoplasmic reticulum membrane. Necessary for protein translocation in the endoplasmic reticulum and multi-pass membrane protein biogenesis. The polypeptide is Protein transport protein Sec61 subunit gamma (SEC61G) (Ciona intestinalis (Transparent sea squirt)).